The chain runs to 374 residues: Glutamine synthetase (374 aa).

A required for glutamine-induced ubiquitination by CRL4(CRBN) and proteasomal degradation region spans residues 2–25 (TTSASSHLNKGIKQVYMSLPQGEK). An N6-acetyllysine mark is found at Lys-11 and Lys-14. Residues 24-106 (EKVQAMYIWI…VLCESFQVQF (83 aa)) form the GS beta-grasp domain. Residues 114 to 374 (LRHTCKRIMD…TGDEPFQYKN (261 aa)) form the GS catalytic domain. Residue Glu-135 coordinates ATP. 4 residues coordinate Mn(2+): Glu-135, Glu-137, Glu-197, and Glu-204. An ATP-binding site is contributed by 204-209 (EFQIGP). 247 to 248 (NW) is an L-glutamate binding site. His-254 lines the Mn(2+) pocket. ATP is bound by residues 256–258 (NFS), Arg-320, and Arg-325. Residue Arg-320 coordinates L-glutamate. 337–339 (YFE) contributes to the ADP binding site. Glu-339 contributes to the Mn(2+) binding site. Arg-341 is a binding site for L-glutamate. Ser-344 carries the post-translational modification Phosphoserine.

It belongs to the glutamine synthetase family. Decamer; composed of two pentamers. Interacts with PALMD. Interacts with RHOJ. Interacts with BEST2; this interaction tethers a fraction of GLUL to the membrane, causing a decrease of cytosolic glutamine synthase (GS) activity and inhibits the chloride channel activity of BEST2 by affecting the gating at the aperture in the absence of intracellular glutamate. Mg(2+) is required as a cofactor. The cofactor is Mn(2+). Post-translationally, palmitoylated; undergoes autopalmitoylation. In terms of processing, acetylated by EP300/p300; acetylation is stimulated by increased glutamine levels and promotes ubiquitin-mediated proteasomal degradation. Ubiquitinated by ZNRF1. Ubiquitinated by the DCX (DDB1-CUL4-X-box) E3 ubiquitin-protein ligase complex called CRL4(CRBN), leading to proteasomal degradation.

The protein localises to the cytoplasm. It is found in the cytosol. Its subcellular location is the microsome. It localises to the mitochondrion. The protein resides in the cell membrane. It carries out the reaction L-glutamate + NH4(+) + ATP = L-glutamine + ADP + phosphate + H(+). The catalysed reaction is L-cysteinyl-[protein] + hexadecanoyl-CoA = S-hexadecanoyl-L-cysteinyl-[protein] + CoA. With respect to regulation, glutamine synthetase activity is inhibited by methionine sulfoximine (MSO). In terms of biological role, glutamine synthetase that catalyzes the ATP-dependent conversion of glutamate and ammonia to glutamine. Its role depends on tissue localization: in the brain, it regulates the levels of toxic ammonia and converts neurotoxic glutamate to harmless glutamine, whereas in the liver, it is one of the enzymes responsible for the removal of ammonia. Plays a key role in ammonium detoxification during erythropoiesis: the glutamine synthetase activity is required to remove ammonium generated by porphobilinogen deaminase (HMBS) during heme biosynthesis to prevent ammonium accumulation and oxidative stress. Essential for proliferation of fetal skin fibroblasts. Independently of its glutamine synthetase activity, required for endothelial cell migration during vascular development. Involved in angiogenesis by regulating membrane localization and activation of the GTPase RHOJ, possibly by promoting RHOJ palmitoylation. May act as a palmitoyltransferase for RHOJ: able to autopalmitoylate and then transfer the palmitoyl group to RHOJ. Plays a role in ribosomal 40S subunit biogenesis. Through the interaction with BEST2, inhibits BEST2 channel activity by affecting the gating at the aperture in the absence of intracellular L-glutamate, but sensitizes BEST2 to intracellular L-glutamate, which promotes the opening of BEST2 and thus relieves its inhibitory effect on BEST2. In Macaca fascicularis (Crab-eating macaque), this protein is Glutamine synthetase.